We begin with the raw amino-acid sequence, 227 residues long: Cytochrome c oxidase subunit 2 (227 aa).

Residues 1–14 are Mitochondrial intermembrane-facing; sequence MAYPFQLGLQDATS. A helical membrane pass occupies residues 15–45; that stretch reads PIMEELTNFHDHTLMIVFLISSLVLYLISLM. Residues 46–59 are Mitochondrial matrix-facing; that stretch reads LSTKLIHTSTMDAQ. Residues 60-87 traverse the membrane as a helical segment; sequence EVETIWTILPAIILIMIALPSLRILYMM. Residues 88–227 are Mitochondrial intermembrane-facing; that stretch reads DEINNPALTV…LFENWSISMS (140 aa). His-161, Cys-196, Glu-198, Cys-200, His-204, and Met-207 together coordinate Cu cation. Glu-198 contributes to the Mg(2+) binding site.

Belongs to the cytochrome c oxidase subunit 2 family. As to quaternary structure, component of the cytochrome c oxidase (complex IV, CIV), a multisubunit enzyme composed of 14 subunits. The complex is composed of a catalytic core of 3 subunits MT-CO1, MT-CO2 and MT-CO3, encoded in the mitochondrial DNA, and 11 supernumerary subunits COX4I, COX5A, COX5B, COX6A, COX6B, COX6C, COX7A, COX7B, COX7C, COX8 and NDUFA4, which are encoded in the nuclear genome. The complex exists as a monomer or a dimer and forms supercomplexes (SCs) in the inner mitochondrial membrane with NADH-ubiquinone oxidoreductase (complex I, CI) and ubiquinol-cytochrome c oxidoreductase (cytochrome b-c1 complex, complex III, CIII), resulting in different assemblies (supercomplex SCI(1)III(2)IV(1) and megacomplex MCI(2)III(2)IV(2)). Found in a complex with TMEM177, COA6, COX18, COX20, SCO1 and SCO2. Interacts with TMEM177 in a COX20-dependent manner. Interacts with COX20. Interacts with COX16. It depends on Cu cation as a cofactor.

The protein localises to the mitochondrion inner membrane. The catalysed reaction is 4 Fe(II)-[cytochrome c] + O2 + 8 H(+)(in) = 4 Fe(III)-[cytochrome c] + 2 H2O + 4 H(+)(out). Its function is as follows. Component of the cytochrome c oxidase, the last enzyme in the mitochondrial electron transport chain which drives oxidative phosphorylation. The respiratory chain contains 3 multisubunit complexes succinate dehydrogenase (complex II, CII), ubiquinol-cytochrome c oxidoreductase (cytochrome b-c1 complex, complex III, CIII) and cytochrome c oxidase (complex IV, CIV), that cooperate to transfer electrons derived from NADH and succinate to molecular oxygen, creating an electrochemical gradient over the inner membrane that drives transmembrane transport and the ATP synthase. Cytochrome c oxidase is the component of the respiratory chain that catalyzes the reduction of oxygen to water. Electrons originating from reduced cytochrome c in the intermembrane space (IMS) are transferred via the dinuclear copper A center (CU(A)) of subunit 2 and heme A of subunit 1 to the active site in subunit 1, a binuclear center (BNC) formed by heme A3 and copper B (CU(B)). The BNC reduces molecular oxygen to 2 water molecules using 4 electrons from cytochrome c in the IMS and 4 protons from the mitochondrial matrix. In Gerbilliscus robustus (Fringe-tailed gerbil), this protein is Cytochrome c oxidase subunit 2 (MT-CO2).